The primary structure comprises 244 residues: 7-cyano-7-deazaguanine synthase (244 aa).

Phe-19 to Leu-29 is a binding site for ATP. Zn(2+)-binding residues include Cys-207, Cys-222, Cys-225, and Cys-228.

It belongs to the QueC family. Requires Zn(2+) as cofactor.

It catalyses the reaction 7-carboxy-7-deazaguanine + NH4(+) + ATP = 7-cyano-7-deazaguanine + ADP + phosphate + H2O + H(+). The protein operates within purine metabolism; 7-cyano-7-deazaguanine biosynthesis. Catalyzes the ATP-dependent conversion of 7-carboxy-7-deazaguanine (CDG) to 7-cyano-7-deazaguanine (preQ(0)). The protein is 7-cyano-7-deazaguanine synthase of Bordetella avium (strain 197N).